We begin with the raw amino-acid sequence, 338 residues long: Glyceraldehyde-3-phosphate dehydrogenase (338 aa).

NAD(+)-binding positions include Arg-12–Ile-13, Asp-34, and Arg-79. D-glyceraldehyde 3-phosphate-binding positions include Ser-150–Thr-152, Thr-181, Thr-210–Gly-211, and Arg-233. Catalysis depends on Cys-151, which acts as the Nucleophile. Residue Asn-315 coordinates NAD(+).

Belongs to the glyceraldehyde-3-phosphate dehydrogenase family. Homotetramer.

Its subcellular location is the cytoplasm. It carries out the reaction D-glyceraldehyde 3-phosphate + phosphate + NAD(+) = (2R)-3-phospho-glyceroyl phosphate + NADH + H(+). It participates in carbohydrate degradation; glycolysis; pyruvate from D-glyceraldehyde 3-phosphate: step 1/5. The polypeptide is Glyceraldehyde-3-phosphate dehydrogenase (gpd-1) (Neurospora crassa (strain ATCC 24698 / 74-OR23-1A / CBS 708.71 / DSM 1257 / FGSC 987)).